The sequence spans 112 residues: Protein Churchill (112 aa).

The Zn(2+) site is built by Cys2, Cys5, Cys30, Cys33, His59, Cys61, Cys64, His66, His71, Cys88, and Cys91.

The protein belongs to the Churchill family.

Its function is as follows. Transcriptional activator that mediates FGF signaling during neural development. Plays a role in the regulation of cell movement. Does not bind DNA by itself. This Bos taurus (Bovine) protein is Protein Churchill (CHURC1).